The chain runs to 717 residues: uncharacterized protein (717 aa).

Residues 19 to 38 (VFLSTIFVSIIFCLGILFLV) traverse the membrane as a helical segment.

It to E.coli YtfN.

It localises to the membrane. This is an uncharacterized protein from Buchnera aphidicola subsp. Baizongia pistaciae (strain Bp).